The sequence spans 145 residues: Large ribosomal subunit protein uL11 (145 aa).

The protein belongs to the universal ribosomal protein uL11 family. Part of the ribosomal stalk of the 50S ribosomal subunit. Interacts with L10 and the large rRNA to form the base of the stalk. L10 forms an elongated spine to which L12 dimers bind in a sequential fashion forming a multimeric L10(L12)X complex. In terms of processing, one or more lysine residues are methylated.

Its function is as follows. Forms part of the ribosomal stalk which helps the ribosome interact with GTP-bound translation factors. In Hydrogenobaculum sp. (strain Y04AAS1), this protein is Large ribosomal subunit protein uL11.